The following is a 132-amino-acid chain: Small ribosomal subunit protein uS8c (132 aa).

This sequence belongs to the universal ribosomal protein uS8 family. Part of the 30S ribosomal subunit.

It localises to the plastid. Its subcellular location is the chloroplast. In terms of biological role, one of the primary rRNA binding proteins, it binds directly to 16S rRNA central domain where it helps coordinate assembly of the platform of the 30S subunit. This Amborella trichopoda protein is Small ribosomal subunit protein uS8c (rps8).